The chain runs to 188 residues: Pupal cuticle protein Edg-84A (188 aa).

A signal peptide spans 1-17; that stretch reads MLVKTALFVTLIGLAQA. The tract at residues 19–67 is disordered; sequence PLPAKSSGSEDTYDSHPQYSFNYDVQDPETGDVKSQSESRDGDVVHGQY. A compositionally biased stretch (polar residues) spans 24–41; sequence SSGSEDTYDSHPQYSFNY. Residues 34–100 form the Chitin-binding type R&amp;R domain; the sequence is HPQYSFNYDV…AVVRREPLSS (67 aa). The segment covering 49–62 has biased composition (basic and acidic residues); it reads GDVKSQSESRDGDV.

Imaginal (anterior) epidermis.

Component of the cuticle of the pupa of fruit fly. This is Pupal cuticle protein Edg-84A (Edg84A) from Drosophila melanogaster (Fruit fly).